The chain runs to 507 residues: ATP synthase subunit alpha, chloroplastic (507 aa).

Position 170 to 177 (170 to 177 (GDRQTGKT)) interacts with ATP.

Belongs to the ATPase alpha/beta chains family. As to quaternary structure, F-type ATPases have 2 components, CF(1) - the catalytic core - and CF(0) - the membrane proton channel. CF(1) has five subunits: alpha(3), beta(3), gamma(1), delta(1), epsilon(1). CF(0) has four main subunits: a, b, b' and c.

The protein resides in the plastid. The protein localises to the chloroplast thylakoid membrane. The enzyme catalyses ATP + H2O + 4 H(+)(in) = ADP + phosphate + 5 H(+)(out). Produces ATP from ADP in the presence of a proton gradient across the membrane. The alpha chain is a regulatory subunit. This Cycas taitungensis (Prince sago) protein is ATP synthase subunit alpha, chloroplastic.